Reading from the N-terminus, the 638-residue chain is Exocyst complex component EXO70A1 (638 aa).

The tract at residues 163-190 (FDGLPNSLRPSSDGDGGGKPHGGHHNDD) is disordered.

This sequence belongs to the EXO70 family. In terms of assembly, the exocyst complex is composed of SEC3, SEC5, SEC6, SEC8, SEC10, EXO70A1 and EXO84B. Interacts with SEC3A and EXO84B. Co-localizes with FPP3/VETH1, FPP2/VETH2 and COG2 in vesicle-like small motile compartments. May interact with COG2.

It is found in the cytoplasm. It localises to the cytosol. The protein localises to the cytoskeleton. Its subcellular location is the phragmoplast. The protein resides in the cell membrane. It is found in the secreted. It localises to the cell wall. Functionally, component of the exocyst complex involved in the docking of exocytic vesicles with fusion sites on the plasma membrane during regulated or polarized secretion. Involved in polarized cell growth and organ morphogenesis. Involved in polarized cell growth and organ morphogenesis. During cytokinesis, involved in cell plate initiation, cell plate maturation and formation of new primary cell wall. Participates in polarized pectin delivery required for the polarized development of the mucilage-producing volcano cells of the seed coat. Involved in the recycling and localization of auxin efflux carriers PIN1 and PIN2, and thus in polar auxin transport regulation. Functions in vesicle trafficking in tracheary elements to regulate patterned secondary cell wall (SCW) thickening. The polypeptide is Exocyst complex component EXO70A1 (Arabidopsis thaliana (Mouse-ear cress)).